Here is a 60-residue protein sequence, read N- to C-terminus: Large ribosomal subunit protein bL32 (60 aa).

The segment covering 1–16 (MAVPRRKTSPSRRGMR) has biased composition (basic residues). The interval 1 to 60 (MAVPRRKTSPSRRGMRRSADAIKKPTYVEDKDSGELRRPHHLDLKTGMYKGRQVLKKKDA) is disordered. The segment covering 17-44 (RSADAIKKPTYVEDKDSGELRRPHHLDL) has biased composition (basic and acidic residues).

This sequence belongs to the bacterial ribosomal protein bL32 family.

The polypeptide is Large ribosomal subunit protein bL32 (Bradyrhizobium sp. (strain BTAi1 / ATCC BAA-1182)).